We begin with the raw amino-acid sequence, 364 residues long: D-alanine--D-alanine ligase (364 aa).

In terms of domain architecture, ATP-grasp spans 141–346 (KNLFAQAGLR…YSELIERLIA (206 aa)). 174–229 (EQELGYPCFVKPANAGSSVGISKCKQRDDLKTAFAEAFKYDRKIIIEESIVGREIE) contacts ATP. Residues Asp300, Glu313, and Asn315 each coordinate Mg(2+).

Belongs to the D-alanine--D-alanine ligase family. Requires Mg(2+) as cofactor. The cofactor is Mn(2+).

The protein resides in the cytoplasm. It catalyses the reaction 2 D-alanine + ATP = D-alanyl-D-alanine + ADP + phosphate + H(+). The protein operates within cell wall biogenesis; peptidoglycan biosynthesis. Functionally, cell wall formation. The protein is D-alanine--D-alanine ligase of Geobacillus thermodenitrificans (strain NG80-2).